Here is a 121-residue protein sequence, read N- to C-terminus: UPF0102 protein AAur_2443 (121 aa).

Belongs to the UPF0102 family.

This Paenarthrobacter aurescens (strain TC1) protein is UPF0102 protein AAur_2443.